The chain runs to 361 residues: Phosphoserine aminotransferase (361 aa).

Residue Arg-43 participates in L-glutamate binding. Pyridoxal 5'-phosphate contacts are provided by residues 77–78, Trp-103, Thr-153, Asp-173, and Gln-196; that span reads AS. Lys-197 carries the N6-(pyridoxal phosphate)lysine modification. Position 238 to 239 (238 to 239) interacts with pyridoxal 5'-phosphate; that stretch reads NT.

Belongs to the class-V pyridoxal-phosphate-dependent aminotransferase family. SerC subfamily. Homodimer. Pyridoxal 5'-phosphate serves as cofactor.

The protein resides in the cytoplasm. It catalyses the reaction O-phospho-L-serine + 2-oxoglutarate = 3-phosphooxypyruvate + L-glutamate. It carries out the reaction 4-(phosphooxy)-L-threonine + 2-oxoglutarate = (R)-3-hydroxy-2-oxo-4-phosphooxybutanoate + L-glutamate. It functions in the pathway amino-acid biosynthesis; L-serine biosynthesis; L-serine from 3-phospho-D-glycerate: step 2/3. The protein operates within cofactor biosynthesis; pyridoxine 5'-phosphate biosynthesis; pyridoxine 5'-phosphate from D-erythrose 4-phosphate: step 3/5. Its function is as follows. Catalyzes the reversible conversion of 3-phosphohydroxypyruvate to phosphoserine and of 3-hydroxy-2-oxo-4-phosphonooxybutanoate to phosphohydroxythreonine. The protein is Phosphoserine aminotransferase of Pseudomonas putida (strain ATCC 47054 / DSM 6125 / CFBP 8728 / NCIMB 11950 / KT2440).